The chain runs to 588 residues: Serine/threonine-protein phosphatase 2A 65 kDa regulatory subunit A alpha isoform (588 aa).

14 HEAT repeats span residues 2–42 (AMVD…ALGE), 44–80 (RTRK…FVGG), 81–119 (IEFA…QMKE), 158–196 (DVLK…TVES), 197–235 (TFLI…LLEP), 236–274 (QDCV…AVGP), 275–313 (DCTR…LLNP), 315–352 (LAIQ…ILGK), 353–391 (DSTI…VIGI), 393–430 (LLSQ…QLGI), 432–469 (FFDD…EFGP), 470–508 (EWAM…VMGS), 509–547 (EITC…IVDQ), and 549–586 (VVDK…STAA).

This sequence belongs to the phosphatase 2A regulatory subunit A family. As to quaternary structure, PP2A consists of a common heterodimeric core enzyme, composed of a 36 kDa catalytic subunit (subunit C) and a 65 kDa constant regulatory subunit (subunit A), that associates with a variety of regulatory subunits such as subunits B (the R2/B/PR55/B55, R3/B''/PR72/PR130/PR59 and R5/B'/B56 families) and the regulatory subunits TON2. Interacts with CYP20-1/ROC7. Also interacts with phosphatidic acid (PA), a lipid signaling molecule. Interacts with CHIP. Interacts with SIC/RON3. Ubiquitinated. CHIP-mediated ubiquitination enhances phosphatase activity after an abiotic stress such as low temperature or darkness. In terms of tissue distribution, mostly expressed in cell-dividing tissues such as apical meristems. Ubiquitous, with higher levels in roots and flowers (at protein level).

It localises to the cytoplasm. The protein resides in the cytosol. It is found in the nucleus. Functionally, the A subunit of protein phosphatase 2A serves as a scaffolding molecule to coordinate the assembly of the catalytic subunit and a variable regulatory B subunit. Seems to act as a positive regulator of PP2A catalytic activity. Confers resistance to phosphatase inhibitors such as okadaic acid and cantharidin. Involved during developmental process such as seedling and floral developments, root gravitropism, and stomatal opening regulation. Involved in the regulation of auxin efflux, especially during basipetal (tips to base) auxin transport in roots, and appears to contribute to the perception of auxin efflux inhibitors such as 1-N-naphthylphthalamic acid (NPA) and to semicarbazone I (substituted phenylsemicarbazone of 2-acetylarylcarboxylic acids) (SCB-I). Modulates the magnitude of ethylene response in the hypocotyl and stem, and functions as a general positive transducer of early ABA signaling. The holoenzyme composed of PP2AA1, PP2A4 and B'ZETA or B'ETA acts as a negative regulator of plant innate immunity by controlling BAK1 phosphorylation state and activation in surface-localized immune receptor complexes. This is Serine/threonine-protein phosphatase 2A 65 kDa regulatory subunit A alpha isoform (PP2AA1) from Arabidopsis thaliana (Mouse-ear cress).